Consider the following 391-residue polypeptide: Thioredoxin-interacting protein (391 aa).

Lys212 is covalently cross-linked (Glycyl lysine isopeptide (Lys-Gly) (interchain with G-Cter in ubiquitin)). Position 361 is a phosphoserine (Ser361).

It belongs to the arrestin family. In terms of assembly, homodimer; disulfide-linked. Interacts with TXN/thioredoxin through its redox-active site. Interacts with transcriptional repressors ZBTB16, ZBTB32 and HDAC1. Interacts with DDIT4. In terms of processing, ubiquitinated; undergoes heterotypic 'Lys-48'-/'Lys-63'-branched polyubiquitination catalyzed by ITCH and UBR5 resulting in proteasomal degradation. Deubiquitinated by USP5, leading to TXNIP stabilization.

It localises to the cytoplasm. Its function is as follows. May act as an oxidative stress mediator by inhibiting thioredoxin activity or by limiting its bioavailability. Interacts with COPS5 and restores COPS5-induced suppression of CDKN1B stability, blocking the COPS5-mediated translocation of CDKN1B from the nucleus to the cytoplasm. Functions as a transcriptional repressor, possibly by acting as a bridge molecule between transcription factors and corepressor complexes, and over-expression will induce G0/G1 cell cycle arrest. Required for the maturation of natural killer cells. Acts as a suppressor of tumor cell growth. Inhibits the proteasomal degradation of DDIT4, and thereby contributes to the inhibition of the mammalian target of rapamycin complex 1 (mTORC1). This is Thioredoxin-interacting protein (TXNIP) from Pongo abelii (Sumatran orangutan).